The sequence spans 509 residues: Aldehyde dehydrogenase 1A1 (509 aa).

Residues 175-178, 201-204, 234-235, 254-255, and 277-279 contribute to the NAD(+) site; these read IPWN, KPAE, GP, GS, and ELG. Residue glutamate 277 is the Proton acceptor of the active site. Residue cysteine 311 is the Nucleophile of the active site. Residues 357–361 and 408–410 contribute to the NAD(+) site; these read EQFQK and EIF.

The protein belongs to the aldehyde dehydrogenase family. Homotetramer.

Its subcellular location is the cytoplasm. The protein resides in the cytosol. The protein localises to the cell projection. It localises to the axon. It carries out the reaction an aldehyde + NAD(+) + H2O = a carboxylate + NADH + 2 H(+). It catalyses the reaction all-trans-retinal + NAD(+) + H2O = all-trans-retinoate + NADH + 2 H(+). The enzyme catalyses 9-cis-retinal + NAD(+) + H2O = 9-cis-retinoate + NADH + 2 H(+). The catalysed reaction is 11-cis-retinal + NAD(+) + H2O = 11-cis-retinoate + NADH + 2 H(+). It carries out the reaction 13-cis-retinal + NAD(+) + H2O = 13-cis-retinoate + NADH + 2 H(+). It catalyses the reaction 3-deoxyglucosone + NAD(+) + H2O = 2-dehydro-3-deoxy-D-gluconate + NADH + 2 H(+). The enzyme catalyses (E)-4-hydroxynon-2-enal + NAD(+) + H2O = (E)-4-hydroxynon-2-enoate + NADH + 2 H(+). The catalysed reaction is malonaldehyde + NAD(+) + H2O = 3-oxopropanoate + NADH + 2 H(+). It carries out the reaction hexanal + NAD(+) + H2O = hexanoate + NADH + 2 H(+). It catalyses the reaction propanal + NAD(+) + H2O = propanoate + NADH + 2 H(+). The enzyme catalyses acetaldehyde + NAD(+) + H2O = acetate + NADH + 2 H(+). The catalysed reaction is benzaldehyde + NAD(+) + H2O = benzoate + NADH + 2 H(+). It carries out the reaction 4-aminobutanal + NAD(+) + H2O = 4-aminobutanoate + NADH + 2 H(+). Its pathway is cofactor metabolism; retinol metabolism. Its function is as follows. Cytosolic dehydrogenase that catalyzes the irreversible oxidation of a wide range of aldehydes to their corresponding carboxylic acid. Functions downstream of retinol dehydrogenases and catalyzes the oxidation of retinaldehyde into retinoic acid, the second step in the oxidation of retinol/vitamin A into retinoic acid. This pathway is crucial to control the levels of retinol and retinoic acid, two important molecules which excess can be teratogenic and cytotoxic. Also oxidizes aldehydes resulting from lipid peroxidation like (E)-4-hydroxynon-2-enal/HNE, malonaldehyde and hexanal that form protein adducts and are highly cytotoxic. By participating for instance to the clearance of (E)-4-hydroxynon-2-enal/HNE in the lens epithelium prevents the formation of HNE-protein adducts and lens opacification. Also functions downstream of fructosamine-3-kinase in the fructosamine degradation pathway by catalyzing the oxidation of 3-deoxyglucosone, the carbohydrate product of fructosamine 3-phosphate decomposition, which is itself a potent glycating agent that may react with lysine and arginine side-chains of proteins. Also has an aminobutyraldehyde dehydrogenase activity and is probably part of an alternative pathway for the biosynthesis of GABA/4-aminobutanoate in midbrain, thereby playing a role in GABAergic synaptic transmission. This is Aldehyde dehydrogenase 1A1 from Gallus gallus (Chicken).